We begin with the raw amino-acid sequence, 502 residues long: Glycerol kinase (502 aa).

Thr14 is a binding site for ADP. Thr14, Thr15, and Ser16 together coordinate ATP. Thr14 is a sn-glycerol 3-phosphate binding site. Arg18 provides a ligand contact to ADP. Residues Arg84, Glu85, and Tyr136 each coordinate sn-glycerol 3-phosphate. Arg84, Glu85, and Tyr136 together coordinate glycerol. His232 carries the phosphohistidine; by HPr modification. Asp246 provides a ligand contact to sn-glycerol 3-phosphate. Residues Asp246 and Gln247 each contribute to the glycerol site. 2 residues coordinate ADP: Thr268 and Gly311. ATP is bound by residues Thr268, Gly311, Gln315, and Gly412. Positions 412 and 416 each coordinate ADP.

Belongs to the FGGY kinase family. In terms of assembly, homotetramer and homodimer (in equilibrium). The phosphoenolpyruvate-dependent sugar phosphotransferase system (PTS), including enzyme I, and histidine-containing protein (HPr) are required for the phosphorylation, which leads to the activation of the enzyme.

The catalysed reaction is glycerol + ATP = sn-glycerol 3-phosphate + ADP + H(+). It functions in the pathway polyol metabolism; glycerol degradation via glycerol kinase pathway; sn-glycerol 3-phosphate from glycerol: step 1/1. With respect to regulation, activated by phosphorylation and inhibited by fructose 1,6-bisphosphate (FBP). Its function is as follows. Key enzyme in the regulation of glycerol uptake and metabolism. Catalyzes the phosphorylation of glycerol to yield sn-glycerol 3-phosphate. The sequence is that of Glycerol kinase from Streptococcus sanguinis (strain SK36).